A 345-amino-acid polypeptide reads, in one-letter code: Probable G-protein coupled receptor 139 (345 aa).

Residues 1 to 21 are Extracellular-facing; sequence MEHTHAHLAANSSACGLGFVP. Asn11 is a glycosylation site (N-linked (GlcNAc...) asparagine). The helical transmembrane segment at 22 to 42 threads the bilayer; the sequence is VVYYSFLLCLGLPANILTVII. Residues 43–57 are Cytoplasmic-facing; it reads LSQLVARRQKSSYNY. A helical transmembrane segment spans residues 58-78; sequence LLALAAADILVLFFIVFVDFL. Topologically, residues 79–94 are extracellular; it reads LEDFILTMQMPLIPDK. A helical membrane pass occupies residues 95 to 115; that stretch reads IIEVLEFSSIHTSIWITVPLT. The Cytoplasmic segment spans residues 116–140; the sequence is VDRYIAVCHPLKYHTVSYPARTRKV. Residues 141-161 form a helical membrane-spanning segment; sequence ILSVYITCFLTSIPYYWWPNI. Residues 162-173 are Extracellular-facing; it reads WTEDYISTSMHH. A helical transmembrane segment spans residues 174–194; it reads VLVWIHCFTVYLVPCSIFFIL. At 195 to 220 the chain is on the cytoplasmic side; sequence NSIIVYKLRRKSNFRLRGYSTGKTTA. Residues 221-241 form a helical membrane-spanning segment; sequence ILFTITSIFATLWAPRIIMIL. At 242 to 260 the chain is on the extracellular side; it reads YHLYGAPIQNPWLVHIMLD. A helical transmembrane segment spans residues 261-281; that stretch reads VANMLALLNTAINFFLYCFIS. Topologically, residues 282 to 345 are cytoplasmic; that stretch reads KRFRTMAAAT…KHGKPIKVSP (64 aa).

The protein belongs to the G-protein coupled receptor 1 family. Expressed almost exclusively in the brain. Abundantly expressed in the ventrolateral region of caudate putamen, the habenular nucleus, the zona incerta, and the medial mammillary nucleus.

It localises to the cell membrane. In terms of biological role, orphan receptor. Seems to act through a G(q/11)-mediated pathway. The sequence is that of Probable G-protein coupled receptor 139 (Gpr139) from Mus musculus (Mouse).